A 724-amino-acid chain; its full sequence is Catalase-peroxidase (724 aa).

Residues Trp98–Tyr226 constitute a cross-link (tryptophyl-tyrosyl-methioninium (Trp-Tyr) (with M-252)). His99 (proton acceptor) is an active-site residue. Positions Tyr226–Met252 form a cross-link, tryptophyl-tyrosyl-methioninium (Tyr-Met) (with W-98). His267 is a binding site for heme b.

This sequence belongs to the peroxidase family. Peroxidase/catalase subfamily. As to quaternary structure, homodimer or homotetramer. Heme b is required as a cofactor. Post-translationally, formation of the three residue Trp-Tyr-Met cross-link is important for the catalase, but not the peroxidase activity of the enzyme.

It carries out the reaction H2O2 + AH2 = A + 2 H2O. The enzyme catalyses 2 H2O2 = O2 + 2 H2O. Bifunctional enzyme with both catalase and broad-spectrum peroxidase activity. The sequence is that of Catalase-peroxidase from Psychromonas ingrahamii (strain DSM 17664 / CCUG 51855 / 37).